Consider the following 368-residue polypeptide: GTPase Obg (368 aa).

The Obg domain maps to 1-159 (MQFIDQAEIE…RQLRLELKLL (159 aa)). Positions 160 to 328 (AEVGIIGLPN…LMQLVWQWLD (169 aa)) constitute an OBG-type G domain. Residues 166–173 (GLPNAGKS), 191–195 (FTTLV), 213–216 (DIPG), 280–283 (NKID), and 309–311 (SAA) each bind GTP. 2 residues coordinate Mg(2+): S173 and T193.

It belongs to the TRAFAC class OBG-HflX-like GTPase superfamily. OBG GTPase family. In terms of assembly, monomer. The cofactor is Mg(2+).

The protein resides in the cytoplasm. In terms of biological role, an essential GTPase which binds GTP, GDP and possibly (p)ppGpp with moderate affinity, with high nucleotide exchange rates and a fairly low GTP hydrolysis rate. Plays a role in control of the cell cycle, stress response, ribosome biogenesis and in those bacteria that undergo differentiation, in morphogenesis control. The sequence is that of GTPase Obg from Synechocystis sp. (strain ATCC 27184 / PCC 6803 / Kazusa).